We begin with the raw amino-acid sequence, 436 residues long: UDP-N-acetylmuramate--L-alanine ligase (436 aa).

Position 108-114 (108-114 (GAHGKTS)) interacts with ATP.

It belongs to the MurCDEF family.

It is found in the cytoplasm. The enzyme catalyses UDP-N-acetyl-alpha-D-muramate + L-alanine + ATP = UDP-N-acetyl-alpha-D-muramoyl-L-alanine + ADP + phosphate + H(+). It functions in the pathway cell wall biogenesis; peptidoglycan biosynthesis. Functionally, cell wall formation. This is UDP-N-acetylmuramate--L-alanine ligase from Bacillus cereus (strain Q1).